Reading from the N-terminus, the 833-residue chain is Serine/threonine-protein phosphatase 4 regulatory subunit 3A (833 aa).

Residues 1–100 enclose the WH1 domain; sequence MTDTRRRVKV…DEIWEKICQV (100 aa). A phosphoserine mark is found at S117 and S127. N6-acetyllysine is present on K655. The span at 683–694 shows a compositional bias: acidic residues; it reads FNTDEDDMEDGE. 2 disordered regions span residues 683 to 712 and 733 to 833; these read FNTDEDDMEDGEAVVSPSDKTKNDDDIMDP and KTNL…KFDS. Phosphoserine is present on residues S698, S741, S768, S771, S774, S777, and S780. Positions 734–751 are enriched in polar residues; the sequence is TNLSGRQSPSFKLSLSSG. The segment covering 752-768 has biased composition (low complexity); that stretch reads TKTNLTSQSSTTNLPGS. Polar residues predominate over residues 785–794; sequence PKNTSQTAAI. Residues 806–820 are compositionally biased toward acidic residues; it reads YPDDDEDDDEDEDKE.

Belongs to the SMEK family. Serine/threonine-protein phosphatase 4 (PP4) occurs in different assemblies of the catalytic and one or more regulatory subunits. Component of the PP4 complex PPP4C-PPP4R2-PPP4R3A. Interacts with PPP4C; the interaction requires PPP4R2.

The protein resides in the cytoplasm. It localises to the cytoskeleton. Its subcellular location is the microtubule organizing center. It is found in the centrosome. The protein localises to the nucleus. Regulatory subunit of serine/threonine-protein phosphatase 4. May regulate the activity of PPP4C at centrosomal microtubule organizing centers. The PPP4C-PPP4R2-PPP4R3A PP4 complex specifically dephosphorylates H2AX phosphorylated on 'Ser-140' (gamma-H2AX) generated during DNA replication and required for DNA DSB repair. In Homo sapiens (Human), this protein is Serine/threonine-protein phosphatase 4 regulatory subunit 3A.